We begin with the raw amino-acid sequence, 315 residues long: tRNA dimethylallyltransferase (315 aa).

9–16 provides a ligand contact to ATP; it reads GPTASGKT. 11–16 provides a ligand contact to substrate; that stretch reads TASGKT. Interaction with substrate tRNA stretches follow at residues 34–37 and 158–162; these read DSLL and QRIQR.

It belongs to the IPP transferase family. In terms of assembly, monomer. Requires Mg(2+) as cofactor.

The catalysed reaction is adenosine(37) in tRNA + dimethylallyl diphosphate = N(6)-dimethylallyladenosine(37) in tRNA + diphosphate. Its function is as follows. Catalyzes the transfer of a dimethylallyl group onto the adenine at position 37 in tRNAs that read codons beginning with uridine, leading to the formation of N6-(dimethylallyl)adenosine (i(6)A). This is tRNA dimethylallyltransferase from Acidithiobacillus ferrooxidans (strain ATCC 53993 / BNL-5-31) (Leptospirillum ferrooxidans (ATCC 53993)).